A 503-amino-acid chain; its full sequence is 12-dehydrotetracycline 5-monooxygenase/anhydrotetracycline 6-monooxygenase (503 aa).

Residues threonine 13, 32–33, leucine 44, glutamine 99, valine 123, threonine 160, aspartate 288, and 301–302 each bind FAD; these read ER and LN.

This sequence belongs to the PheA/TfdB FAD monooxygenase family. Monomer. Requires FAD as cofactor.

It catalyses the reaction 5a,11a-dehydrotetracycline + NADPH + O2 + H(+) = 5a,11a-dehydrooxytetracycline + NADP(+) + H2O. The enzyme catalyses anhydrotetracycline + NADPH + O2 + H(+) = 5a,11a-dehydrotetracycline + NADP(+) + H2O. It participates in antibiotic biosynthesis; oxytetracycline biosynthesis. In terms of biological role, involved in the biosynthesis of the antibiotics oxytetracycline and tetracycline. OxyS starts by catalyzing the stereospecific hydroxylation of anhydrotetracycline at C(6) position to yield 5a,11a-dehydrotetracycline (12-dehydrotetracycline). If the released product is captured by OxyR, it is reduced to tetracycline. However, if the released product is recaptured by OxyS, it performs an additional hydroxylation at C(5), producing 5a,11a-dehydrooxytetracycline, which, following the action of OxyR becomes oxytetracycline. This chain is 12-dehydrotetracycline 5-monooxygenase/anhydrotetracycline 6-monooxygenase, found in Streptomyces rimosus subsp. rimosus (strain ATCC 10970 / DSM 40260 / JCM 4667 / NRRL 2234).